A 2300-amino-acid chain; its full sequence is Protein Ycf2 (2300 aa).

1642–1649 (GSIGTGRS) serves as a coordination point for ATP.

It belongs to the Ycf2 family.

It is found in the plastid. The protein resides in the chloroplast stroma. In terms of biological role, probable ATPase of unknown function. Its presence in a non-photosynthetic plant (Epifagus virginiana) and experiments in tobacco indicate that it has an essential function which is probably not related to photosynthesis. The sequence is that of Protein Ycf2 from Vitis vinifera (Grape).